The primary structure comprises 135 residues: MKYFVVALALVAAFACIAESKPAESEHELAEVEEENELADLEDAVWLEHLADLSDLEEARGFFGNTWKKIKGKADKIMLKKAVKIMVKKEGISKEEAQAKVDAMSKKQIRLYVLKHYGKKSSSKSFRKIVISKSF.

The signal sequence occupies residues 1–20; the sequence is MKYFVVALALVAAFACIAES. Positions 21 to 60 are excised as a propeptide; it reads KPAESEHELAEVEEENELADLEDAVWLEHLADLSDLEEAR.

Belongs to the cationic peptide 06 (cytoinsectotoxin) family. Expressed by the venom gland.

The protein resides in the secreted. Its function is as follows. Insecticidal, cytolytic and antimicrobial peptide. Forms voltage-dependent, ion-permeable channels in membranes. At high concentration causes cell membrane lysis. The chain is M-zodatoxin-Lt8q (cit 1-16) from Lachesana tarabaevi (Spider).